A 239-amino-acid polypeptide reads, in one-letter code: tRNA (guanine-N(1)-)-methyltransferase (239 aa).

S-adenosyl-L-methionine-binding positions include glycine 110 and 130-135 (IGDYVL).

This sequence belongs to the RNA methyltransferase TrmD family. Homodimer.

Its subcellular location is the cytoplasm. It catalyses the reaction guanosine(37) in tRNA + S-adenosyl-L-methionine = N(1)-methylguanosine(37) in tRNA + S-adenosyl-L-homocysteine + H(+). Specifically methylates guanosine-37 in various tRNAs. The polypeptide is tRNA (guanine-N(1)-)-methyltransferase (Borrelia garinii subsp. bavariensis (strain ATCC BAA-2496 / DSM 23469 / PBi) (Borreliella bavariensis)).